We begin with the raw amino-acid sequence, 189 residues long: GMP synthase [glutamine-hydrolyzing] subunit A (189 aa).

The Glutamine amidotransferase type-1 domain maps to M1–E189. C76 acts as the Nucleophile in catalysis. Residues H163 and E165 contribute to the active site.

As to quaternary structure, heterodimer composed of a glutamine amidotransferase subunit (A) and a GMP-binding subunit (B).

The catalysed reaction is XMP + L-glutamine + ATP + H2O = GMP + L-glutamate + AMP + diphosphate + 2 H(+). It participates in purine metabolism; GMP biosynthesis; GMP from XMP (L-Gln route): step 1/1. Functionally, catalyzes the synthesis of GMP from XMP. The sequence is that of GMP synthase [glutamine-hydrolyzing] subunit A from Methanococcus maripaludis (strain C6 / ATCC BAA-1332).